Consider the following 237-residue polypeptide: Thiamine-phosphate synthase (237 aa).

Residues 57–61 and Asn-98 each bind 4-amino-2-methyl-5-(diphosphooxymethyl)pyrimidine; that span reads QLRDK. Mg(2+)-binding residues include Asp-99 and Asp-118. Position 136 (Ser-136) interacts with 4-amino-2-methyl-5-(diphosphooxymethyl)pyrimidine. Residue 162–164 coordinates 2-[(2R,5Z)-2-carboxy-4-methylthiazol-5(2H)-ylidene]ethyl phosphate; that stretch reads TPT. Lys-165 serves as a coordination point for 4-amino-2-methyl-5-(diphosphooxymethyl)pyrimidine. Residue Gly-193 participates in 2-[(2R,5Z)-2-carboxy-4-methylthiazol-5(2H)-ylidene]ethyl phosphate binding.

The protein belongs to the thiamine-phosphate synthase family. Mg(2+) serves as cofactor.

It catalyses the reaction 2-[(2R,5Z)-2-carboxy-4-methylthiazol-5(2H)-ylidene]ethyl phosphate + 4-amino-2-methyl-5-(diphosphooxymethyl)pyrimidine + 2 H(+) = thiamine phosphate + CO2 + diphosphate. The enzyme catalyses 2-(2-carboxy-4-methylthiazol-5-yl)ethyl phosphate + 4-amino-2-methyl-5-(diphosphooxymethyl)pyrimidine + 2 H(+) = thiamine phosphate + CO2 + diphosphate. It carries out the reaction 4-methyl-5-(2-phosphooxyethyl)-thiazole + 4-amino-2-methyl-5-(diphosphooxymethyl)pyrimidine + H(+) = thiamine phosphate + diphosphate. It functions in the pathway cofactor biosynthesis; thiamine diphosphate biosynthesis; thiamine phosphate from 4-amino-2-methyl-5-diphosphomethylpyrimidine and 4-methyl-5-(2-phosphoethyl)-thiazole: step 1/1. Functionally, condenses 4-methyl-5-(beta-hydroxyethyl)thiazole monophosphate (THZ-P) and 2-methyl-4-amino-5-hydroxymethyl pyrimidine pyrophosphate (HMP-PP) to form thiamine monophosphate (TMP). The chain is Thiamine-phosphate synthase from Mycolicibacterium gilvum (strain PYR-GCK) (Mycobacterium gilvum (strain PYR-GCK)).